Reading from the N-terminus, the 106-residue chain is Large ribosomal subunit protein uL24 (106 aa).

This sequence belongs to the universal ribosomal protein uL24 family. In terms of assembly, part of the 50S ribosomal subunit.

Its function is as follows. One of two assembly initiator proteins, it binds directly to the 5'-end of the 23S rRNA, where it nucleates assembly of the 50S subunit. In terms of biological role, one of the proteins that surrounds the polypeptide exit tunnel on the outside of the subunit. In Polaromonas naphthalenivorans (strain CJ2), this protein is Large ribosomal subunit protein uL24.